The chain runs to 95 residues: Co-chaperonin GroES (95 aa).

This sequence belongs to the GroES chaperonin family. As to quaternary structure, heptamer of 7 subunits arranged in a ring. Interacts with the chaperonin GroEL.

The protein resides in the cytoplasm. Functionally, together with the chaperonin GroEL, plays an essential role in assisting protein folding. The GroEL-GroES system forms a nano-cage that allows encapsulation of the non-native substrate proteins and provides a physical environment optimized to promote and accelerate protein folding. GroES binds to the apical surface of the GroEL ring, thereby capping the opening of the GroEL channel. This chain is Co-chaperonin GroES, found in Bordetella avium (strain 197N).